Here is a 20-residue protein sequence, read N- to C-terminus: SVAVAGAVIEGATLTFNVLQ.

The segment at 3-12 (AVAGAVIEGA) is plays an important role in the hemolytic activity. The segment at 11-20 (GATLTFNVLQ) is N-terminal region.

The protein belongs to the actinoporin family. Sea anemone subfamily. As to quaternary structure, octamer or nonamer in membranes. Monomer in the soluble state.

The protein localises to the secreted. It localises to the nematocyst. The protein resides in the target cell membrane. Pore-forming protein that forms cations-selective hydrophilic pores of around 1 nm and causes cardiac stimulation and cytolysis. Pore formation is a multi-step process that involves specific recognition of membrane sphingomyelin (but neither cholesterol nor phosphatidylcholine) using aromatic rich region and adjacent phosphocholine (POC) binding site, firm binding to the membrane (mainly driven by hydrophobic interactions) accompanied by the transfer of the N-terminal region to the lipid-water interface and finally pore formation after oligomerization of monomers. Cytolytic effects include red blood cells hemolysis, platelet aggregation and lysis, cytotoxic and cytostatic effects on fibroblasts. Lethality in mammals has been ascribed to severe vasospasm of coronary vessels, cardiac arrhythmia, and inotropic effects. The sequence is that of Equinatoxin-1'' from Actinia equina (Beadlet anemone).